A 93-amino-acid chain; its full sequence is MRTYELMAVFSAHEDLFLQGSTAVRALLQENDAVIAREDHIGERELAYPLKKQKRGRYLLFIVQCEPGKVRELDHKLRLRHDLLTHLFVRVDS.

It belongs to the bacterial ribosomal protein bS6 family.

Binds together with bS18 to 16S ribosomal RNA. In Treponema pallidum (strain Nichols), this protein is Small ribosomal subunit protein bS6 (rpsF).